Consider the following 387-residue polypeptide: Phosphoglycerate kinase (387 aa).

Residues 21 to 23 (DLN), Arg-36, 59 to 62 (HLGR), Arg-113, and Arg-146 each bind substrate. Residues Lys-197, Glu-314, and 340-343 (GGDT) each bind ATP.

This sequence belongs to the phosphoglycerate kinase family. Monomer.

It is found in the cytoplasm. The catalysed reaction is (2R)-3-phosphoglycerate + ATP = (2R)-3-phospho-glyceroyl phosphate + ADP. It functions in the pathway carbohydrate degradation; glycolysis; pyruvate from D-glyceraldehyde 3-phosphate: step 2/5. The polypeptide is Phosphoglycerate kinase (Salmonella schwarzengrund (strain CVM19633)).